The following is a 133-amino-acid chain: Large ribosomal subunit protein bL20 (133 aa).

This sequence belongs to the bacterial ribosomal protein bL20 family.

Binds directly to 23S ribosomal RNA and is necessary for the in vitro assembly process of the 50S ribosomal subunit. It is not involved in the protein synthesizing functions of that subunit. The protein is Large ribosomal subunit protein bL20 of Bartonella tribocorum (strain CIP 105476 / IBS 506).